The sequence spans 623 residues: DNA-directed RNA polymerase subunit beta' (623 aa).

4 residues coordinate Zn(2+): Cys-70, Cys-72, Cys-85, and Cys-88. Mg(2+) contacts are provided by Asp-466, Asp-468, and Asp-470.

Belongs to the RNA polymerase beta' chain family. RpoC1 subfamily. In terms of assembly, in plastids the minimal PEP RNA polymerase catalytic core is composed of four subunits: alpha, beta, beta', and beta''. When a (nuclear-encoded) sigma factor is associated with the core the holoenzyme is formed, which can initiate transcription. Requires Mg(2+) as cofactor. It depends on Zn(2+) as a cofactor.

The protein localises to the plastid. Its subcellular location is the chloroplast. It carries out the reaction RNA(n) + a ribonucleoside 5'-triphosphate = RNA(n+1) + diphosphate. Functionally, DNA-dependent RNA polymerase catalyzes the transcription of DNA into RNA using the four ribonucleoside triphosphates as substrates. This chain is DNA-directed RNA polymerase subunit beta', found in Guillardia theta (Cryptophyte).